A 146-amino-acid polypeptide reads, in one-letter code: uncharacterized protein (146 aa).

4 helical membrane passes run 1 to 21, 35 to 55, 87 to 107, and 111 to 131; these read MFANAGLSPFVAIWTARAASL, AAVYVGSAVVPAAVAGPLFVG, GGAGGWVGVHCPVVGGGGVGH, and AIAAAVSVHSTCMPAAFGGHL.

Its subcellular location is the cell membrane. This is an uncharacterized protein from Mycobacterium tuberculosis (strain CDC 1551 / Oshkosh).